We begin with the raw amino-acid sequence, 319 residues long: ATP-dependent 6-phosphofructokinase (319 aa).

Gly11 provides a ligand contact to ATP. Position 21 to 25 (21 to 25 (RAVTR)) interacts with ADP. Residues 72 to 73 (RY) and 102 to 105 (GDGS) each bind ATP. Asp103 serves as a coordination point for Mg(2+). Residue 125–127 (TID) participates in substrate binding. The active-site Proton acceptor is the Asp127. Arg154 serves as a coordination point for ADP. Residues Arg162 and 169–171 (MGR) each bind substrate. ADP-binding positions include 185–187 (GAD) and 213–215 (KDH). Residues Glu222, Arg243, and 249–252 (HMQR) contribute to the substrate site.

Belongs to the phosphofructokinase type A (PFKA) family. ATP-dependent PFK group I subfamily. Prokaryotic clade 'B1' sub-subfamily. In terms of assembly, homotetramer. Mg(2+) is required as a cofactor.

Its subcellular location is the cytoplasm. It catalyses the reaction beta-D-fructose 6-phosphate + ATP = beta-D-fructose 1,6-bisphosphate + ADP + H(+). It participates in carbohydrate degradation; glycolysis; D-glyceraldehyde 3-phosphate and glycerone phosphate from D-glucose: step 3/4. Its activity is regulated as follows. Allosterically activated by ADP and other diphosphonucleosides, and allosterically inhibited by phosphoenolpyruvate. The binding affinities for these effectors are decreased however, and therefore the allosteric effect becomes apparent only at high effector concentrations. Functionally, catalyzes the phosphorylation of D-fructose 6-phosphate to fructose 1,6-bisphosphate by ATP, the first committing step of glycolysis. This Lactobacillus delbrueckii subsp. bulgaricus protein is ATP-dependent 6-phosphofructokinase.